Consider the following 79-residue polypeptide: Conotoxin Vi6.1 (79 aa).

The first 22 residues, 1-22, serve as a signal peptide directing secretion; sequence MKLTCVLIITVLFLTASQLITA. A propeptide spanning residues 23-47 is cleaved from the precursor; it reads DYSRDQRQYRAVRLGDEMRNFKGAR. Disulfide bonds link cysteine 49/cysteine 62, cysteine 56/cysteine 67, and cysteine 61/cysteine 77. Proline 60 and proline 63 each carry 4-hydroxyproline.

Expressed by the venom duct.

Its subcellular location is the secreted. Ion channel inhibitor that inhibits the increase in intracellular calcium upon depolarization in DRG neurons. In vivo, both intraperitoneal and intracranial injections into mice induce hyperactivity. This is Conotoxin Vi6.1 from Conus virgo (Virgin cone).